Reading from the N-terminus, the 663-residue chain is Transketolase 2 (663 aa).

His25 contributes to the substrate binding site. Thiamine diphosphate-binding positions include His65 and 113-115 (GPL). Asp154 contacts Mg(2+). 2 residues coordinate thiamine diphosphate: Gly155 and Asn184. Residues Asn184 and Ile186 each coordinate Mg(2+). The substrate site is built by His259, Arg356, and Ser383. His259 contacts thiamine diphosphate. Residue Glu410 is the Proton donor of the active site. Thiamine diphosphate is bound at residue Phe436. Residues His460, Asp468, and Arg519 each contribute to the substrate site.

Belongs to the transketolase family. As to quaternary structure, homodimer. The cofactor is Mg(2+). Ca(2+) serves as cofactor. Mn(2+) is required as a cofactor. It depends on Co(2+) as a cofactor. Requires thiamine diphosphate as cofactor.

It carries out the reaction D-sedoheptulose 7-phosphate + D-glyceraldehyde 3-phosphate = aldehydo-D-ribose 5-phosphate + D-xylulose 5-phosphate. Catalyzes the transfer of a two-carbon ketol group from a ketose donor to an aldose acceptor, via a covalent intermediate with the cofactor thiamine pyrophosphate. In Vibrio vulnificus (strain CMCP6), this protein is Transketolase 2 (tkt2).